The sequence spans 133 residues: Fluoride-specific ion channel FluC (133 aa).

The next 4 membrane-spanning stretches (helical) occupy residues 5–25, 43–63, 76–96, and 108–128; these read VPAT…LGAL, VATL…YVVI, VIMI…IESL, and ISYV…AIVL. Na(+) is bound by residues Gly-83 and Thr-86.

This sequence belongs to the fluoride channel Fluc/FEX (TC 1.A.43) family.

The protein resides in the cell inner membrane. The enzyme catalyses fluoride(in) = fluoride(out). With respect to regulation, na(+) is not transported, but it plays an essential structural role and its presence is essential for fluoride channel function. In terms of biological role, fluoride-specific ion channel. Important for reducing fluoride concentration in the cell, thus reducing its toxicity. This chain is Fluoride-specific ion channel FluC, found in Saccharophagus degradans (strain 2-40 / ATCC 43961 / DSM 17024).